The sequence spans 373 residues: Alpha-1,3-mannosyl-glycoprotein 4-beta-N-acetylglucosaminyltransferase-like protein MGAT4D (373 aa).

The Cytoplasmic segment spans residues 1–5 (MKAKN). A helical; Signal-anchor for type II membrane protein transmembrane segment spans residues 6–26 (VNLLFAFVAVLLFGFSCFCIS). Residues 27-373 (RMNQTNNQLI…REQHLKDNYY (347 aa)) are Lumenal-facing. Asn29, Asn54, and Asn144 each carry an N-linked (GlcNAc...) asparagine glycan.

It belongs to the glycosyltransferase 54 family. In terms of assembly, isoform 2 self-associates; specifically in the endoplasmic reticulum prior to its translocation to the Golgi. Isoform 1 and isoform 2 interact with MGAT1, MGAT3 and MAN2A2; isoform 2 interacts specifically with MGAT1 in the Golgi. In terms of processing, isoform 2 is N-glycosylated; consisting of high-mannose and/or hybrid glycans. Isoform 1 and isoform 2 are specifically expressed in testis. Isoform 2 is expressed in spermatocytes but not in spermatids. Isoform 1 is expressed in spermatids.

Its subcellular location is the endoplasmic reticulum membrane. It localises to the endoplasmic reticulum-Golgi intermediate compartment membrane. It is found in the golgi apparatus membrane. Its function is as follows. May play a role in male spermatogenesis. In vitro acts as inhibitor of MGAT1 activity causing cell surface proteins to carry mainly high mannose N-glycans. The function is mediated by its lumenal domain and occurs specifically in the Golgi. A catalytic glucosyltransferase activity is not detected. May be involved in regulation of Sertoli-germ cell interactions during specific stages of spermatogenesis. The sequence is that of Alpha-1,3-mannosyl-glycoprotein 4-beta-N-acetylglucosaminyltransferase-like protein MGAT4D from Mus musculus (Mouse).